The following is a 278-amino-acid chain: Short-chain dehydrogenase/reductase eupG (278 aa).

The NADP(+) site is built by Leu-19, Asp-71, and Asn-98. Ser-155 acts as the Proton donor in catalysis. Residues Tyr-188, Lys-192, and Thr-223 each contribute to the NADP(+) site. Tyr-188 serves as the catalytic Proton acceptor. Lys-192 (lowers pKa of active site Tyr) is an active-site residue.

Belongs to the short-chain dehydrogenases/reductases (SDR) family.

The protein operates within secondary metabolite biosynthesis; terpenoid biosynthesis. Short-chain dehydrogenase/reductase; part of the gene cluster that mediates the biosynthesis of eupenifeldin, a bistropolone meroterpenoid that acts as an antitumor agent. The first step of eupenifeldin biosynthesis is the biosynthesis of 3-methylorcinaldehyde performed by the non-reducing polyketide synthase eupA. Oxidative dearomatization of 3-methylorcinaldehyde likely catalyzed by the FAD-dependent monooxygenase eupB is followed by oxidative ring expansion by the 2-oxoglutarate-dependent dioxygenase eupC to provide the first tropolone metabolite, tropolone stipitaldehyde. In parallel, generation of sesquiterpene alpha-humulene from farnesylpyrophosphate (FPP) is catalyzed by the terpene cyclase eupE. The cytochrome P450 monooxygenase eupD then hydroxylates humulene to humulenol. The putative Diels-Alderase eupF probably catalyzes the formation of the tropolone-humulene skeleton by linking humulenol and the polyketide moiety. The short-chain dehydrogenase/reductase eupG and the flavin-dependent monooxygenase eupH are also essential for eupenifeldin biosynthesis and are likely the additional decorating enzymes of the tropolone-humulene skeleton to produce final eupenifeldin or derivatives. This chain is Short-chain dehydrogenase/reductase eupG, found in Phoma sp.